The primary structure comprises 558 residues: MAKLLSCVLGPRLYKIYRERDTDRAASSVPETPTAVPAASSSSWDTYYQPRALEKHADSILALASVFWSISYYSSPFAFFYLYRKGYLSLSKVVPFSHYAGTLLLLLAGVACLRGIGRWTNPQYRQFITILEATHRNQSAENKRQLANYNFDFRSWPVDFHWEEPSSRKGSRGGPSRRGVALLRPEPLHRGTADTFLNRVKKLPCQITSYLVAHTLGRRMLYPGSVYLLQKALMPVLLQGQARLVEECNGRRAKLLACDGNEIDTMFVDRRGTAEPQGQKLVICCEGNAGFYEVGCVSTPLEAGYSVLGWNHPGFAGSTGVPFPQNEANAMDVVVQFAIHRLGFQPQDIVIYAWSIGGFTATWAAMSYPDISAVILDASFDDLVPLALKVMPDSWRALVTRTVRQHLNLNNSEQLCRFQGPVLLVRRTKDEIITTTVPEDIMSNRGNDLLLKLLQFRYPRVMVEEGLRAVRQWLEASSQLEEASIYSRWEVEEDWCVSVLRSYQAEHGPDFPWSVGEDMSADGRRQLALFLARKHLHNFEATHCTPLPAQHFQMPWHL.

Helical transmembrane passes span 60 to 80 and 93 to 113; these read ILAL…FAFF and VVPF…VACL. The Cytoplasmic portion of the chain corresponds to 114 to 558; sequence RGIGRWTNPQ…AQHFQMPWHL (445 aa). One can recognise an AB hydrolase-1 domain in the interval 281–406; the sequence is LVICCEGNAG…ALVTRTVRQH (126 aa). Residues Ser355, Asp430, and His507 each act as charge relay system in the active site.

It belongs to the AB hydrolase superfamily. ABHD16 family.

The protein resides in the membrane. It carries out the reaction 1-heptadecanoyl-2-(5Z,8Z,11Z,14Z-eicosatetraenoyl)-sn-glycero-3-phosphoserine + H2O = 1-heptadecanoyl-sn-glycero-3-phosphoserine + (5Z,8Z,11Z,14Z)-eicosatetraenoate + H(+). The enzyme catalyses 1-hexadecanoyl-2-(9Z-octadecenoyl)-sn-glycero-3-phospho-L-serine + H2O = 1-hexadecanoyl-sn-glycero-3-phospho-L-serine + (9Z)-octadecenoate + H(+). It catalyses the reaction 1-octadecanoyl-2-(9Z,12Z-octadecadienoyl)-sn-glycero-3-phosphoserine + H2O = 1-octadecanoyl-sn-glycero-3-phosphoserine + (9Z,12Z)-octadecadienoate + H(+). The catalysed reaction is 1-heptadecanoyl-2-(5Z,8Z,11Z,14Z-eicosatetraenoyl)-sn-glycero-3-phosphocholine + H2O = 1-heptadecanoyl-sn-glycero-3-phosphocholine + (5Z,8Z,11Z,14Z)-eicosatetraenoate + H(+). It carries out the reaction 1-hexadecanoyl-2-(9Z-octadecenoyl)-sn-glycero-3-phosphoglycerol + H2O = 1-hexadecanoyl-sn-glycero-3-phosphoglycerol + (9Z)-octadecenoate + H(+). The enzyme catalyses 1-hexadecanoyl-2-(9Z-octadecenoyl)-sn-glycero-3-phospho-(1D-myo-inositol) + H2O = 1-hexadecanoyl-sn-glycero-3-phospho-(1D-myo-inositol) + (9Z)-octadecenoate + H(+). It catalyses the reaction 1-heptadecanoyl-2-(5Z,8Z,11Z,14Z-eicosatetraenoyl)-sn-glycero-3-phosphoethanolamine + H2O = 1-heptadecanoyl-sn-glycero-3-phosphoethanolamine + (5Z,8Z,11Z,14Z)-eicosatetraenoate + H(+). The catalysed reaction is 1-hexadecanoyl-2-(9Z-octadecenoyl)-sn-glycero-3-phospho-(1'-sn-glycerol) + H2O = 1-hexadecanoyl-sn-glycero-3-phospho-(1'-sn-glycerol) + (9Z)-octadecenoate + H(+). It carries out the reaction Hydrolyzes glycerol monoesters of long-chain fatty acids.. The enzyme catalyses 1-tetradecanoylglycerol + H2O = tetradecanoate + glycerol + H(+). It catalyses the reaction 2-hexadecanoylglycerol + H2O = glycerol + hexadecanoate + H(+). The catalysed reaction is 1-(9Z-octadecenoyl)-glycerol + H2O = glycerol + (9Z)-octadecenoate + H(+). It carries out the reaction 2-(9Z-octadecenoyl)-glycerol + H2O = glycerol + (9Z)-octadecenoate + H(+). The enzyme catalyses 2-(9Z,12Z-octadecadienoyl)-glycerol + H2O = (9Z,12Z)-octadecadienoate + glycerol + H(+). It catalyses the reaction 1-(5Z,8Z,11Z,14Z-eicosatetraenoyl)-glycerol + H2O = glycerol + (5Z,8Z,11Z,14Z)-eicosatetraenoate + H(+). The catalysed reaction is 2-(5Z,8Z,11Z,14Z-eicosatetraenoyl)-glycerol + H2O = glycerol + (5Z,8Z,11Z,14Z)-eicosatetraenoate + H(+). It carries out the reaction prostaglandin D2-1-glycerol ester + H2O = prostaglandin D2 + glycerol + H(+). The enzyme catalyses 2-glyceryl-15-deoxy-Delta(12,14)-prostaglandin J2 + H2O = 15-deoxy-Delta(12,14)-prostaglandin J2 + glycerol + H(+). It catalyses the reaction 1-(9Z,12Z-octadecadienoyl)-glycerol + H2O = (9Z,12Z)-octadecadienoate + glycerol + H(+). With respect to regulation, specifically inhibited by alpha-alkylidene-beta-lactone KC01 ((Z)-6-(2-Oxo-4-tridecyloxetan-3-ylidene)hexanamide). Phosphatidylserine (PS) lipase that mediates the hydrolysis of phosphatidylserine to generate lysophosphatidylserine (LPS). LPS constitutes a class of signaling lipids that regulates immunological and neurological processes. Has no activity towards diacylglycerol, triacylglycerol or lysophosphatidylserine lipase. Also has monoacylglycerol lipase activity, with preference for 1-(9Z,12Z-octadecadienoyl)-glycerol (1-LG) and 2-glyceryl-15-deoxy-Delta(12,14)-prostaglandin J2 (15d-PGJ(2)-G). The protein is Phosphatidylserine lipase ABHD16A of Mus musculus (Mouse).